The chain runs to 443 residues: GTPase Der (443 aa).

2 EngA-type G domains span residues 3-167 (PTLV…PEPE) and 176-349 (VRVA…AAAM). GTP contacts are provided by residues 9–16 (GRPNVGKS), 56–60 (DTGGF), 119–122 (NKAE), 182–189 (GRPNVGKS), 229–233 (DTAGM), and 294–297 (NKWD). The region spanning 350–434 (AKMTTPRLTR…PLRIQFVTAK (85 aa)) is the KH-like domain.

The protein belongs to the TRAFAC class TrmE-Era-EngA-EngB-Septin-like GTPase superfamily. EngA (Der) GTPase family. Associates with the 50S ribosomal subunit.

In terms of biological role, GTPase that plays an essential role in the late steps of ribosome biogenesis. This chain is GTPase Der, found in Dechloromonas aromatica (strain RCB).